Here is a 187-residue protein sequence, read N- to C-terminus: MTVSASKTAQQLKYIKDSIKTIPDYPKAGILFRDVTSLLENPKAYSASIELLSEHYSESGVTKVVGTEARGFLFGAPVALALGVGFVPVRKPGKLPRETISESYELEYGTDTLEIHTDSIQPGDKVLVVDDLLATGGTIEATVKLIRRLGGEVVHAAFIINLPELGGEARLTQQGIHCYSLVSFDGH.

The protein belongs to the purine/pyrimidine phosphoribosyltransferase family. Homodimer.

It is found in the cytoplasm. The catalysed reaction is AMP + diphosphate = 5-phospho-alpha-D-ribose 1-diphosphate + adenine. It participates in purine metabolism; AMP biosynthesis via salvage pathway; AMP from adenine: step 1/1. In terms of biological role, catalyzes a salvage reaction resulting in the formation of AMP, that is energically less costly than de novo synthesis. The chain is Adenine phosphoribosyltransferase from Yersinia pseudotuberculosis serotype I (strain IP32953).